Here is a 287-residue protein sequence, read N- to C-terminus: Protease HtpX (287 aa).

Helical transmembrane passes span 4–24 (VFLL…VMSI) and 33–53 (GGLL…SLAI). His-139 provides a ligand contact to Zn(2+). Glu-140 is an active-site residue. His-143 provides a ligand contact to Zn(2+). The next 2 membrane-spanning stretches (helical) occupy residues 154 to 174 (LIQG…AGII) and 195 to 215 (GVVF…VAYF). A Zn(2+)-binding site is contributed by Glu-220.

This sequence belongs to the peptidase M48B family. It depends on Zn(2+) as a cofactor.

The protein localises to the cell inner membrane. The chain is Protease HtpX from Shewanella denitrificans (strain OS217 / ATCC BAA-1090 / DSM 15013).